Reading from the N-terminus, the 68-residue chain is Small integral membrane protein 10-like protein 3 (68 aa).

Expressed specifically in salivary glands (at protein level).

The polypeptide is Small integral membrane protein 10-like protein 3 (Mus musculus (Mouse)).